The chain runs to 238 residues: Capsular polysaccharide phosphotransferase eps5J (238 aa).

It belongs to the stealth family.

In Streptococcus thermophilus, this protein is Capsular polysaccharide phosphotransferase eps5J (eps5J).